We begin with the raw amino-acid sequence, 443 residues long: Trigger factor (443 aa).

Residues 168-254 (GDFVTIDFEG…IKNLKEKKLP (87 aa)) enclose the PPIase FKBP-type domain.

Belongs to the FKBP-type PPIase family. Tig subfamily.

Its subcellular location is the cytoplasm. The enzyme catalyses [protein]-peptidylproline (omega=180) = [protein]-peptidylproline (omega=0). Involved in protein export. Acts as a chaperone by maintaining the newly synthesized protein in an open conformation. Functions as a peptidyl-prolyl cis-trans isomerase. This chain is Trigger factor, found in Syntrophus aciditrophicus (strain SB).